Here is a 449-residue protein sequence, read N- to C-terminus: Glutamate--tRNA ligase 2 (449 aa).

A 'HIGH' region motif is present at residues 17 to 27; that stretch reads PSPTGFLHVGN. Residues 248-252 carry the 'KMSKS' region motif; that stretch reads ALSKR. Lys251 lines the ATP pocket.

This sequence belongs to the class-I aminoacyl-tRNA synthetase family. Glutamate--tRNA ligase type 1 subfamily. Monomer.

It is found in the cytoplasm. It carries out the reaction tRNA(Glu) + L-glutamate + ATP = L-glutamyl-tRNA(Glu) + AMP + diphosphate. In terms of biological role, catalyzes the attachment of glutamate to tRNA(Glu) in a two-step reaction: glutamate is first activated by ATP to form Glu-AMP and then transferred to the acceptor end of tRNA(Glu). The polypeptide is Glutamate--tRNA ligase 2 (Jannaschia sp. (strain CCS1)).